A 294-amino-acid polypeptide reads, in one-letter code: 4-hydroxy-tetrahydrodipicolinate synthase (294 aa).

Thr-47 is a binding site for pyruvate. The active-site Proton donor/acceptor is Tyr-136. The active-site Schiff-base intermediate with substrate is the Lys-164. Val-206 provides a ligand contact to pyruvate.

Belongs to the DapA family. Homotetramer; dimer of dimers.

The protein resides in the cytoplasm. It catalyses the reaction L-aspartate 4-semialdehyde + pyruvate = (2S,4S)-4-hydroxy-2,3,4,5-tetrahydrodipicolinate + H2O + H(+). It participates in amino-acid biosynthesis; L-lysine biosynthesis via DAP pathway; (S)-tetrahydrodipicolinate from L-aspartate: step 3/4. Functionally, catalyzes the condensation of (S)-aspartate-beta-semialdehyde [(S)-ASA] and pyruvate to 4-hydroxy-tetrahydrodipicolinate (HTPA). The protein is 4-hydroxy-tetrahydrodipicolinate synthase of Nostoc punctiforme (strain ATCC 29133 / PCC 73102).